The following is a 582-amino-acid chain: MAHEGSRQVRDRGVTRSKAEKVRPPTVPVPQVDIVPGRLSEAEWMALTALEEGEDVVGDILADLLARVMDSAFKVYLTQQCIPFTISQAREAMLQITEWRFLARDEGESAVAEDPTWGEDEEPSACTTDSWAQGSVPVLHASTSEGLENFQGEDPGGVDRIPLGRSWMGRGSQEQMESWEPSPQLRVTSAPPPTSELFQEAGPGGPVEEADGQSRGLSSAGSLSASFQLSVEEAPADDADPSLDPYLVASPQASTGRGHPLGFHLSLEDLYCCMPQLDAAGDRLELRSEGVPCIASGVLVSYPSVGGATRPSASCQQQRAGHSDVRLSAHHHRMRRKAAVKRLDPARLPCHWVRPLAEVLVPDSQTRPLEAYRGRQRGEKTKARAEPQALGPGTRVSPAAFFPLRPGIPFRDLDSGPALLFPTLNLGLSSPSLESKLPLPNSRIRFLTTHPVLPDVARSRSPKLWPSVRWPSGWEGKAELLGELWAGRTRVPPQGLELADREGQDPGRWPRTTPPVLEATSQVMWKPVLLPEALKLAPGVSMWNRSTQVLLSSGVPEQEDKEGSTFPPVEQHPIQTGAPKPR.

Residues 1–23 are compositionally biased toward basic and acidic residues; that stretch reads MAHEGSRQVRDRGVTRSKAEKVR. Disordered stretches follow at residues 1–29, 110–133, and 147–221; these read MAHE…TVPV, AVAE…SWAQ, and LENF…SSAG. Ser-242 carries the post-translational modification Phosphoserine. Disordered stretches follow at residues 310-331 and 551-582; these read RPSA…SAHH and LSSG…PKPR. The segment covering 311–320 has biased composition (polar residues); that stretch reads PSASCQQQRA.

This is an uncharacterized protein from Homo sapiens (Human).